The primary structure comprises 314 residues: tRNA pseudouridine synthase B (314 aa).

Asp47 (nucleophile) is an active-site residue.

The protein belongs to the pseudouridine synthase TruB family. Type 1 subfamily.

The enzyme catalyses uridine(55) in tRNA = pseudouridine(55) in tRNA. Its function is as follows. Responsible for synthesis of pseudouridine from uracil-55 in the psi GC loop of transfer RNAs. The polypeptide is tRNA pseudouridine synthase B (Vibrio campbellii (strain ATCC BAA-1116)).